An 813-amino-acid chain; its full sequence is MGNYSTKIDEKWQKKWEENSLYKFNNDNLDKKLYVLEMFSYPSGSKLHAGHWFNYGPVDSWARFKRMQGYNVFQPMGFDAFGLPAENYAIKTGIHPKDSTFKNIETMETQLKAMGAMFNWENEVITCSPDYYKWTQWLFLKLYEKGLAYKKKAPVNWCPSCNTVLANEQVLDGKCERCDSNVDKKNLEQWFLKITDYADELLEKLDELDWPEKTKAMQKHWIGKSVGAEVTFNVADSDLSFNVFTTRVDTLFGVTYVVLAPENDLVDKLTTPENKAEVESYKTQAKNQSDIERQSITREKTGVFSGSYAINPINGKKVPIWIGDYVLNTYGTGCVMAVPAHDERDFAFATKYNLPIERVIEGGDSLPYTEYGKMVNSGEFDGLFGNKAKEAVISKLESMNLGRKKINYRLRDWLVSRQRYWGAPIPIIYCEKCGTVEVPIEQLPVELPYNVEFSPDGKSPLGKCDDFINTTCPKCGGPAKREADTLDTFVCSSWYYLRYPDNNNEKDAFNPELINKMLPVDKYVGGPEHACMHLLYARFITKALRDMGYLNFDEPFLSLTHQGLILGPDGLKMSKSKGNTISPDDYIKEFGADVFRMYLMFGFDYTEGGAWSDDAIKSIGKFVDRVERILENAREEIKNSKDNKSTMDKDEKELNYVRHHSIKSITEDIDKMQFNTSIARLMEFTNALSKYLGSDTLRNASFLRESIIDFITLLAPFAPHFAEEQWELIGINSSIFNEKWPEFDPKALIKDEVEIAVQVNGKIRAKINIYTSSSEDEIKESALNNDDIKNSIGDKEIKKVIVIKNRLVNIVAK.

Residues 40–51 (SYPSGSKLHAGH) carry the 'HIGH' region motif. The 'KMSKS' region motif lies at 572–576 (KMSKS). Residue K575 participates in ATP binding.

Belongs to the class-I aminoacyl-tRNA synthetase family.

The protein resides in the cytoplasm. The enzyme catalyses tRNA(Leu) + L-leucine + ATP = L-leucyl-tRNA(Leu) + AMP + diphosphate. This is Leucine--tRNA ligase from Clostridium botulinum (strain Langeland / NCTC 10281 / Type F).